A 30-amino-acid polypeptide reads, in one-letter code: Cycloviolacin-O20 (30 aa).

The segment at residues 1–30 is a cross-link (cyclopeptide (Gly-Asp)); sequence GIPCGESCVWIPCLTSAIGCSCKSKVCYRD. Intrachain disulfides connect cysteine 4/cysteine 20, cysteine 8/cysteine 22, and cysteine 13/cysteine 27.

Post-translationally, this is a cyclic peptide.

Probably participates in a plant defense mechanism. This Viola odorata (Sweet violet) protein is Cycloviolacin-O20.